The primary structure comprises 456 residues: Glycerol-3-phosphate acyltransferase 4 (456 aa).

The signal sequence occupies residues 1-37 (MFLLLPFDSLIVNLLGISLTVLFTLLLVFIIVPAIFG). Helical transmembrane passes span 156–176 (ISLR…CFLL) and 180–200 (IALA…VGYL). A glycan (N-linked (GlcNAc...) asparagine) is linked at Asn247. Residues 248–253 (HTSPID) carry the HXXXXD motif motif. N-linked (GlcNAc...) asparagine glycans are attached at residues Asn327, Asn328, and Asn362.

It belongs to the 1-acyl-sn-glycerol-3-phosphate acyltransferase family. In terms of tissue distribution, highly expressed in testis.

The protein localises to the endoplasmic reticulum membrane. The enzyme catalyses sn-glycerol 3-phosphate + an acyl-CoA = a 1-acyl-sn-glycero-3-phosphate + CoA. It catalyses the reaction dodecanoyl-CoA + sn-glycerol 3-phosphate = 1-dodecanoyl-sn-glycerol 3-phosphate + CoA. The catalysed reaction is sn-glycerol 3-phosphate + hexadecanoyl-CoA = 1-hexadecanoyl-sn-glycero-3-phosphate + CoA. It carries out the reaction sn-glycerol 3-phosphate + octadecanoyl-CoA = 1-octadecanoyl-sn-glycero-3-phosphate + CoA. The enzyme catalyses sn-glycerol 3-phosphate + (9Z)-octadecenoyl-CoA = 1-(9Z-octadecenoyl)-sn-glycero-3-phosphate + CoA. It catalyses the reaction (9Z,12Z)-octadecadienoyl-CoA + sn-glycerol 3-phosphate = 1-(9Z,12Z)-octadecadienoyl-sn-glycero-3-phosphate + CoA. Its pathway is phospholipid metabolism; CDP-diacylglycerol biosynthesis; CDP-diacylglycerol from sn-glycerol 3-phosphate: step 1/3. Its function is as follows. Converts glycerol-3-phosphate to 1-acyl-sn-glycerol-3-phosphate (lysophosphatidic acid or LPA) by incorporating an acyl moiety at the sn-1 position of the glycerol backbone. Active against both saturated and unsaturated long-chain fatty acyl-CoAs. Protects cells against lipotoxicity. This chain is Glycerol-3-phosphate acyltransferase 4, found in Mus musculus (Mouse).